Reading from the N-terminus, the 650-residue chain is uncharacterized protein (650 aa).

This sequence belongs to the MG032/MG096/MG288 family.

This is an uncharacterized protein from Mycoplasma genitalium (strain ATCC 33530 / DSM 19775 / NCTC 10195 / G37) (Mycoplasmoides genitalium).